The chain runs to 196 residues: GTP cyclohydrolase 1 (196 aa).

Positions 85, 88, and 158 each coordinate Zn(2+).

The protein belongs to the GTP cyclohydrolase I family. Homomer.

The catalysed reaction is GTP + H2O = 7,8-dihydroneopterin 3'-triphosphate + formate + H(+). The protein operates within cofactor biosynthesis; 7,8-dihydroneopterin triphosphate biosynthesis; 7,8-dihydroneopterin triphosphate from GTP: step 1/1. The polypeptide is GTP cyclohydrolase 1 (Corynebacterium aurimucosum (strain ATCC 700975 / DSM 44827 / CIP 107346 / CN-1) (Corynebacterium nigricans)).